The sequence spans 78 residues: MALFEDIQAVIAEQLNVDAVQVTPEAEFVKDLGADSLDVVELIMALEEKFGVEIPDEQAEKIINVGDVVKYIEDNKLA.

The 76-residue stretch at 1–76 folds into the Carrier domain; that stretch reads MALFEDIQAV…DVVKYIEDNK (76 aa). Serine 36 carries the post-translational modification O-(pantetheine 4'-phosphoryl)serine.

Belongs to the acyl carrier protein (ACP) family. In terms of processing, 4'-phosphopantetheine is transferred from CoA to a specific serine of apo-ACP by AcpS. This modification is essential for activity because fatty acids are bound in thioester linkage to the sulfhydryl of the prosthetic group.

The protein localises to the cytoplasm. The protein operates within lipid metabolism; fatty acid biosynthesis. In terms of biological role, carrier of the growing fatty acid chain in fatty acid biosynthesis. The sequence is that of Acyl carrier protein from Helicobacter pylori (strain ATCC 700392 / 26695) (Campylobacter pylori).